A 217-amino-acid chain; its full sequence is Oxygen-insensitive NAD(P)H nitroreductase (217 aa).

Residue 10 to 14 participates in FMN binding; it reads RYSTK. NAD(+) contacts are provided by Lys-14, Thr-41, Asn-71, Lys-74, and Arg-107. Asn-71 contacts FMN. FMN contacts are provided by residues 165–166 and 205–207; these read EG and KSR.

It belongs to the nitroreductase family. In terms of assembly, homodimer. The cofactor is FMN.

In terms of biological role, reduction of a variety of nitroaromatic compounds using NADH (and to lesser extent NADPH) as source of reducing equivalents; two electrons are transferred. Capable of reducing nitrofurazone. The sequence is that of Oxygen-insensitive NAD(P)H nitroreductase from Salmonella typhimurium (strain LT2 / SGSC1412 / ATCC 700720).